Reading from the N-terminus, the 436-residue chain is UPF0597 protein YhaM (436 aa).

It belongs to the UPF0597 family.

The polypeptide is UPF0597 protein YhaM (Shigella sonnei (strain Ss046)).